Consider the following 239-residue polypeptide: tRNA (guanine-N(1)-)-methyltransferase (239 aa).

Residues glycine 110 and 130-135 (VGDYVL) contribute to the S-adenosyl-L-methionine site.

Belongs to the RNA methyltransferase TrmD family. In terms of assembly, homodimer.

It localises to the cytoplasm. It catalyses the reaction guanosine(37) in tRNA + S-adenosyl-L-methionine = N(1)-methylguanosine(37) in tRNA + S-adenosyl-L-homocysteine + H(+). Its function is as follows. Specifically methylates guanosine-37 in various tRNAs. The chain is tRNA (guanine-N(1)-)-methyltransferase from Borrelia hermsii (strain HS1 / DAH).